The chain runs to 452 residues: MEKQYLTVTALTRYIKTKIEYDPHLQSVWLKGEISNFKNHSRGHMYFTLKDENARIAAVMFAGHNRNIKFRPENGMKVLVKGKISVYEASGSYQIYIQDMQPDGIGNLHLAYEQLKVRLEEEGLFSQVYKKTIPPYAKTIGVITSPTGAAIRDIITTIKRRYPIGNVIVFPVLVQGESAAPSIVQAIRTANEMEEIDVLIVGRGGGSIEELWAFNEEMVARAIFKSEIPIISAVGHETDFTVADFVADLRAPTPTAAAELAAPNIIELQEKVLQRTLRLQRAMRELVHKKEEKLQVLQKSYAFRYPRQVYEQKEEQLDRALEQLVLAKERYIDKKVNQLKQLSFYLEKHHPSQKIMQTKVAVETLQKQLQREMQTLLQTKEFAFVRAAQKLEALSPLKVMMRGYGLVYDEEKQVLKSVKDVSLGDAVSVQLQDGILDCSVSGIEERELNNGK.

Belongs to the XseA family. Heterooligomer composed of large and small subunits.

It localises to the cytoplasm. The enzyme catalyses Exonucleolytic cleavage in either 5'- to 3'- or 3'- to 5'-direction to yield nucleoside 5'-phosphates.. Functionally, bidirectionally degrades single-stranded DNA into large acid-insoluble oligonucleotides, which are then degraded further into small acid-soluble oligonucleotides. This chain is Exodeoxyribonuclease 7 large subunit, found in Bacillus cereus (strain 03BB102).